The following is a 204-amino-acid chain: Ras-related and estrogen-regulated growth inhibitor-like protein (204 aa).

A small GTPase-like region spans residues 1-204; that stretch reads MNDVKLTVLG…NVFGKRRKSV (204 aa). GTP contacts are provided by residues 10-17, 57-63, and 122-125; these read GGEGTGKS, DPCSQPQ, and NKQD.

Belongs to the small GTPase superfamily. Ras family.

The catalysed reaction is GTP + H2O = GDP + phosphate + H(+). Binds GDP/GTP and may possess intrinsic GTPase activity. The protein is Ras-related and estrogen-regulated growth inhibitor-like protein (RERGL) of Bos taurus (Bovine).